Here is a 339-residue protein sequence, read N- to C-terminus: Ribosomal RNA small subunit methyltransferase H (339 aa).

S-adenosyl-L-methionine contacts are provided by residues Gly44–Tyr46, Asp61, Phe88, Asp105, and Gln112. Residues Pro263–Ala312 are disordered. Over residues Arg301–Ala312 the composition is skewed to basic residues.

This sequence belongs to the methyltransferase superfamily. RsmH family.

The protein resides in the cytoplasm. It carries out the reaction cytidine(1402) in 16S rRNA + S-adenosyl-L-methionine = N(4)-methylcytidine(1402) in 16S rRNA + S-adenosyl-L-homocysteine + H(+). Its function is as follows. Specifically methylates the N4 position of cytidine in position 1402 (C1402) of 16S rRNA. This is Ribosomal RNA small subunit methyltransferase H from Chelativorans sp. (strain BNC1).